The following is a 71-amino-acid chain: Prophage lysis protein S homolog EssD (71 aa).

Belongs to the lambda phage S protein family.

This chain is Prophage lysis protein S homolog EssD (essD), found in Escherichia coli (strain K12).